The chain runs to 300 residues: U1 small nuclear ribonucleoprotein 70 kDa homolog (300 aa).

Positions 107 to 198 (RTIFIGRLPY…RTVKYFKPRR (92 aa)) constitute an RRM domain. Disordered stretches follow at residues 204 to 248 (GGRG…AYSA) and 263 to 300 (NRPL…APDY). The span at 265 to 279 (PLLSAATPTAAVTSV) shows a compositional bias: low complexity.

In terms of assembly, component of the spliceosome, where it is associated with snRNP U1. Binds stem loop I of U1 snRNA. Interacts with mRNA.

The protein localises to the nucleus. In terms of biological role, involved in nuclear mRNA splicing. The sequence is that of U1 small nuclear ribonucleoprotein 70 kDa homolog (SNP1) from Saccharomyces cerevisiae (strain ATCC 204508 / S288c) (Baker's yeast).